A 282-amino-acid polypeptide reads, in one-letter code: Bifunctional protein FolD (282 aa).

Residues 165–167 (GRS) and Ser190 each bind NADP(+).

The protein belongs to the tetrahydrofolate dehydrogenase/cyclohydrolase family. In terms of assembly, homodimer.

It carries out the reaction (6R)-5,10-methylene-5,6,7,8-tetrahydrofolate + NADP(+) = (6R)-5,10-methenyltetrahydrofolate + NADPH. It catalyses the reaction (6R)-5,10-methenyltetrahydrofolate + H2O = (6R)-10-formyltetrahydrofolate + H(+). It functions in the pathway one-carbon metabolism; tetrahydrofolate interconversion. In terms of biological role, catalyzes the oxidation of 5,10-methylenetetrahydrofolate to 5,10-methenyltetrahydrofolate and then the hydrolysis of 5,10-methenyltetrahydrofolate to 10-formyltetrahydrofolate. The protein is Bifunctional protein FolD of Macrococcus caseolyticus (strain JCSC5402) (Macrococcoides caseolyticum).